A 420-amino-acid polypeptide reads, in one-letter code: Tyrosine--tRNA ligase (420 aa).

Tyr36 contacts L-tyrosine. The short motif at 41-50 is the 'HIGH' region element; it reads PTADSLHIGH. Positions 170 and 174 each coordinate L-tyrosine. A 'KMSKS' region motif is present at residues 231-235; that stretch reads KFGKS. Residue Lys234 participates in ATP binding. An S4 RNA-binding domain is found at 353–420; sequence TNIVEVLIET…KKKYFMVNYQ (68 aa).

The protein belongs to the class-I aminoacyl-tRNA synthetase family. TyrS type 1 subfamily. In terms of assembly, homodimer.

The protein resides in the cytoplasm. It catalyses the reaction tRNA(Tyr) + L-tyrosine + ATP = L-tyrosyl-tRNA(Tyr) + AMP + diphosphate + H(+). Its function is as follows. Catalyzes the attachment of tyrosine to tRNA(Tyr) in a two-step reaction: tyrosine is first activated by ATP to form Tyr-AMP and then transferred to the acceptor end of tRNA(Tyr). The protein is Tyrosine--tRNA ligase of Staphylococcus aureus (strain bovine RF122 / ET3-1).